The chain runs to 406 residues: Acetylornithine aminotransferase (406 aa).

Residues 108–109 (GA) and Phe-141 contribute to the pyridoxal 5'-phosphate site. Arg-144 serves as a coordination point for N(2)-acetyl-L-ornithine. 226-229 (DEVQ) contacts pyridoxal 5'-phosphate. Residue Lys-255 is modified to N6-(pyridoxal phosphate)lysine. Thr-283 is a N(2)-acetyl-L-ornithine binding site. Thr-284 serves as a coordination point for pyridoxal 5'-phosphate.

This sequence belongs to the class-III pyridoxal-phosphate-dependent aminotransferase family. ArgD subfamily. In terms of assembly, homodimer. Pyridoxal 5'-phosphate is required as a cofactor.

It is found in the cytoplasm. It carries out the reaction N(2)-acetyl-L-ornithine + 2-oxoglutarate = N-acetyl-L-glutamate 5-semialdehyde + L-glutamate. The protein operates within amino-acid biosynthesis; L-arginine biosynthesis; N(2)-acetyl-L-ornithine from L-glutamate: step 4/4. This chain is Acetylornithine aminotransferase, found in Pseudomonas putida (strain ATCC 47054 / DSM 6125 / CFBP 8728 / NCIMB 11950 / KT2440).